The primary structure comprises 95 residues: Aspartyl/glutamyl-tRNA(Asn/Gln) amidotransferase subunit C (95 aa).

It belongs to the GatC family. Heterotrimer of A, B and C subunits.

The catalysed reaction is L-glutamyl-tRNA(Gln) + L-glutamine + ATP + H2O = L-glutaminyl-tRNA(Gln) + L-glutamate + ADP + phosphate + H(+). It catalyses the reaction L-aspartyl-tRNA(Asn) + L-glutamine + ATP + H2O = L-asparaginyl-tRNA(Asn) + L-glutamate + ADP + phosphate + 2 H(+). In terms of biological role, allows the formation of correctly charged Asn-tRNA(Asn) or Gln-tRNA(Gln) through the transamidation of misacylated Asp-tRNA(Asn) or Glu-tRNA(Gln) in organisms which lack either or both of asparaginyl-tRNA or glutaminyl-tRNA synthetases. The reaction takes place in the presence of glutamine and ATP through an activated phospho-Asp-tRNA(Asn) or phospho-Glu-tRNA(Gln). The sequence is that of Aspartyl/glutamyl-tRNA(Asn/Gln) amidotransferase subunit C from Bradyrhizobium diazoefficiens (strain JCM 10833 / BCRC 13528 / IAM 13628 / NBRC 14792 / USDA 110).